A 163-amino-acid chain; its full sequence is ATP synthase subunit b 1 (163 aa).

The helical transmembrane segment at 7 to 27 (AETWVAVAFVILMALFAYLGV) threads the bilayer.

It belongs to the ATPase B chain family. As to quaternary structure, F-type ATPases have 2 components, F(1) - the catalytic core - and F(0) - the membrane proton channel. F(1) has five subunits: alpha(3), beta(3), gamma(1), delta(1), epsilon(1). F(0) has three main subunits: a(1), b(2) and c(10-14). The alpha and beta chains form an alternating ring which encloses part of the gamma chain. F(1) is attached to F(0) by a central stalk formed by the gamma and epsilon chains, while a peripheral stalk is formed by the delta and b chains.

The protein resides in the cell inner membrane. Its function is as follows. F(1)F(0) ATP synthase produces ATP from ADP in the presence of a proton or sodium gradient. F-type ATPases consist of two structural domains, F(1) containing the extramembraneous catalytic core and F(0) containing the membrane proton channel, linked together by a central stalk and a peripheral stalk. During catalysis, ATP synthesis in the catalytic domain of F(1) is coupled via a rotary mechanism of the central stalk subunits to proton translocation. Functionally, component of the F(0) channel, it forms part of the peripheral stalk, linking F(1) to F(0). In Rhodopseudomonas palustris (strain BisB5), this protein is ATP synthase subunit b 1.